The chain runs to 354 residues: Anthranilate phosphoribosyltransferase (354 aa).

The protein belongs to the anthranilate phosphoribosyltransferase family.

It carries out the reaction N-(5-phospho-beta-D-ribosyl)anthranilate + diphosphate = 5-phospho-alpha-D-ribose 1-diphosphate + anthranilate. It participates in amino-acid biosynthesis; L-tryptophan biosynthesis; L-tryptophan from chorismate: step 2/5. The sequence is that of Anthranilate phosphoribosyltransferase (trp4) from Schizosaccharomyces pombe (strain 972 / ATCC 24843) (Fission yeast).